A 222-amino-acid polypeptide reads, in one-letter code: Adenylate kinase (222 aa).

10–15 (GAGKGT) provides a ligand contact to ATP. The tract at residues 30–59 (STGDMLRAAVKAGTPLGIEAKKVMDAGGLV) is NMP. AMP contacts are provided by residues threonine 31, arginine 36, 57–59 (GLV), 85–88 (GFPR), and glutamine 92. Positions 122–159 (GRRVHVASGRTYHVKYNPPKTEGVDDESGEPLIQRDDD) are LID. Residues arginine 123 and 132–133 (TY) each bind ATP. The tract at residues 138–160 (NPPKTEGVDDESGEPLIQRDDDK) is disordered. AMP is bound by residues arginine 156 and arginine 167. Glycine 207 provides a ligand contact to ATP.

Belongs to the adenylate kinase family. In terms of assembly, monomer.

The protein resides in the cytoplasm. The enzyme catalyses AMP + ATP = 2 ADP. Its pathway is purine metabolism; AMP biosynthesis via salvage pathway; AMP from ADP: step 1/1. Its function is as follows. Catalyzes the reversible transfer of the terminal phosphate group between ATP and AMP. Plays an important role in cellular energy homeostasis and in adenine nucleotide metabolism. This Ralstonia pickettii (strain 12J) protein is Adenylate kinase.